Here is a 912-residue protein sequence, read N- to C-terminus: WD repeat-containing protein 44 (912 aa).

Residues 1 to 14 (MASESDTEEFFDAP) show a composition bias toward acidic residues. A disordered region spans residues 1 to 25 (MASESDTEEFFDAPEDVHLEGGDPI). An N-acetylalanine modification is found at Ala-2. Positions 2–170 (ASESDTEEFF…SSTAQLNVPE (169 aa)) are binding activity. Phosphoserine is present on Ser-3. The FFAT-like motif motif lies at 9–15 (EFFDAPE). Phosphoserine is present on residues Ser-50, Ser-66, Ser-71, Ser-81, Ser-96, and Ser-126. Disordered regions lie at residues 79–104 (DDSLDSKGKGQSDQATASPVTAGTEL) and 118–152 (QEDSQKAESQDVSEETELESKQCFPSDDTCEKPVD). Polar residues predominate over residues 89–104 (QSDQATASPVTAGTEL). A Phosphothreonine modification is found at Thr-158. Disordered stretches follow at residues 183–202 (VKESDVLESASSHSLSTKDF), 207–279 (EVAP…PKEN), 318–349 (QENGKAPDGQTIAGEVMGPQRPRSNSGRELTD), 396–422 (SNDAAQSDDEEKLQSQQTDTDGGRLKQ), and 457–479 (RDEVFHTDQDDPSSSDDEGMPYT). An important for interaction with ARHGAP26 AND ARHGAP10 region spans residues 210–256 (PAKPPRQLTPEPDIVASTKKPVPARPPPPANFPPPRPPPPSRPAPPP). At Thr-218 the chain carries Phosphothreonine. Residues 232-255 (PARPPPPANFPPPRPPPPSRPAPP) are compositionally biased toward pro residues. Residue Ser-261 is modified to Phosphoserine. The segment covering 261–277 (SELEFEALKTPDLDVPK) has biased composition (basic and acidic residues). Thr-270 is modified (phosphothreonine). The important for interaction with RAB11A stretch occupies residues 333-346 (VMGPQRPRSNSGRE). Positions 334 to 504 (MGPQRPRSNS…DFDQIKVVQD (171 aa)) are interaction with RAB11. A phosphoserine mark is found at Ser-341 and Ser-343. Thr-348 is subject to Phosphothreonine. Phosphoserine occurs at positions 402, 469, 470, and 471. Acidic residues predominate over residues 466–475 (DDPSSSDDEG). At Tyr-478 the chain carries Phosphotyrosine. One copy of the WD 1 repeat lies at 508 to 547 (EHMGAVWTMKFSHCGRLLASAGQDNVVRIWALKNAFDYFN). Residues 556-592 (EGRVSPSPSQESLNSSKSDTDTGVCSGTDEDPDDKNA) form a disordered region. Phosphoserine occurs at positions 560 and 564. Over residues 560-572 (SPSPSQESLNSSK) the composition is skewed to low complexity. WD repeat units lie at residues 604–642 (GHTADLLDLSWSKNYFLLSSSMDKTVRLWHISRRECLCC), 644–684 (QHID…VALW), 689–728 (GQTKLITAANFCQNGKYAVIGTYDGRCIFYDTEHLKYHTQ), 739–778 (KVGRKITGIEPLPGENKILVTSNDSRIRLYDLRDLSLSMK), 783–822 (VNSSSQIKASFSHDFNYLVSGSEDKYVYIWSTYHDLSKFT), and 871–912 (EDAE…KNLS).

Interacts with the GTP-bound form of RAB11A when membrane-associated. Interacts with GRAF1/ARHGAP26 or GRAF2/ARHGAP10; the interaction connects the endoplasmic reticulum (ER) with the endosomal tubule. Interacts (via FFAT-like motif) with VAPA (via MSP domain) or VAPB (via MSP domain); the interaction connects the ER with the endosomal tubule. Does not bind to other Rab and Rho small G proteins. Post-translationally, phosphorylated by ATK1; the phosphorylation stabilizes its interaction with RAB11A and RAB11B. Highly expressed in brain.

The protein localises to the cytoplasm. The protein resides in the cytosol. Its subcellular location is the perinuclear region. It localises to the endosome membrane. It is found in the golgi apparatus. The protein localises to the trans-Golgi network. Downstream effector for Rab11 which regulates Rab11 intracellular membrane trafficking functions such as endocytic recycling, intracellular ciliogenesis and protein export. ATK1-mediated phosphorylation of WDR44 induces binding to Rab11 which activates endocytic recycling of transferrin receptor back to the plasma membrane. When bound to Rab11, prevents the formation of the ciliogenic Rab11-Rabin8/RAB3IP-RAB11FIP3 complex, therefore inhibiting preciliary trafficking and ciliogenesis. Participates in neo-synthesized protein export by connecting the endoplasmic reticulum (ER) with the endosomal tubule via direct interactions with the integral ER proteins VAPA or VAPB and the endosomal protein GRAFs (GRAF1/ARHGAP26 or GRAF2/ARHGAP10), which facilitates the transfer of proteins such as E-cadherin, MPP14 and CFTR into a Rab8-Rab10-Rab11-dependent export route. The chain is WD repeat-containing protein 44 (WDR44) from Bos taurus (Bovine).